The sequence spans 725 residues: Gamma-tubulin complex component 5 (725 aa).

The disordered stretch occupies residues 222-246 (TENEEKMSDNASASSGSDQGPSSRQ). Low complexity predominate over residues 232–244 (ASASSGSDQGPSS).

Belongs to the TUBGCP family. As to quaternary structure, component of the gamma-tubulin ring complex (gTuRC) consisting of TUBGCP2, TUBGCP3, TUBGCP4, TUBGCP5 and TUBGCP6 and gamma-tubulin TUBG1 or TUBG2. TUBGCP2, TUBGCP3, TUBGCP4, TUBGCP5 and TUBGCP6 assemble in a 5:5:2:1:1 stoichiometry; each is associated with a gamma-tubulin, thereby arranging 14 gamma-tubulins in a helical manner. Gamma-tubulin at the first position is blocked by TUBGCP3 at the last position, allowing 13 protafilaments to grow into a microtubule. The gTuRC (via TUBGCP3 and TUBGCP6) interacts with ACTB and MZT1; the interactions form a luminal bridge that stabilizes the initial structure during complex assembly. The gTuRC (via TUBGCP2) interacts with MZT2A/MZT2B and CDK5RAP2 (via CM1 motif); the interactions play a role in gTuRC activation.

Its subcellular location is the cytoplasm. It localises to the cytoskeleton. It is found in the microtubule organizing center. The protein resides in the centrosome. Component of the gamma-tubulin ring complex (gTuRC) which mediates microtubule nucleation. The gTuRC regulates the minus-end nucleation of alpha-beta tubulin heterodimers that grow into microtubule protafilaments, a critical step in centrosome duplication and spindle formation. This Macaca fascicularis (Crab-eating macaque) protein is Gamma-tubulin complex component 5 (TUBGCP5).